A 665-amino-acid chain; its full sequence is Secreted LysM effector Lys3 (665 aa).

The first 19 residues, 1-19, serve as a signal peptide directing secretion; sequence MLWLTVSLTGFALLGVVAA. 2 N-linked (GlcNAc...) asparagine glycosylation sites follow: asparagine 43 and asparagine 153. 3 LysM domains span residues 166-211, 216-264, and 303-349; these read RTYT…TLCL, TLRK…YICI, and KWYV…AYCV. N-linked (GlcNAc...) asparagine glycosylation is present at asparagine 234. N-linked (GlcNAc...) asparagine glycosylation is present at asparagine 398. Residues 409 to 454 form the LysM 4 domain; it reads SWSDAAKLNSCSFIAHINGVTVSQLLQWNPSLSKDSCSLSRELYYC. N-linked (GlcNAc...) asparagine glycosylation occurs at asparagine 531. The segment at 585–610 is disordered; the sequence is SSVSMTNSAPATATSTGGPPAPTQDG. Over residues 592 to 602 the composition is skewed to low complexity; sequence SAPATATSTGG. A glycan (N-linked (GlcNAc...) asparagine) is linked at asparagine 614. The region spanning 617-663 is the LysM 5 domain; the sequence is KWHVVESGDGCWAIYTKYGITSDQLFEWNTKISKDCSNIWLGYAVCV.

The protein belongs to the secreted LysM effector family.

Might have a role in sequestration of chitin oligosaccharides (breakdown products of fungal cell walls that are released during invasion and act as triggers of host immunity) to dampen host defense. The protein is Secreted LysM effector Lys3 of Pochonia chlamydosporia (strain 123) (Metacordyceps chlamydosporia).